A 182-amino-acid chain; its full sequence is Peptide deformylase (182 aa).

Positions 100 and 142 each coordinate Fe cation. The active site involves E143. H146 lines the Fe cation pocket.

The protein belongs to the polypeptide deformylase family. It depends on Fe(2+) as a cofactor.

The catalysed reaction is N-terminal N-formyl-L-methionyl-[peptide] + H2O = N-terminal L-methionyl-[peptide] + formate. Functionally, removes the formyl group from the N-terminal Met of newly synthesized proteins. Requires at least a dipeptide for an efficient rate of reaction. N-terminal L-methionine is a prerequisite for activity but the enzyme has broad specificity at other positions. The chain is Peptide deformylase from Bartonella bacilliformis (strain ATCC 35685 / KC583 / Herrer 020/F12,63).